The following is a 701-amino-acid chain: Polyribonucleotide nucleotidyltransferase (701 aa).

2 residues coordinate Mg(2+): D480 and D486. In terms of domain architecture, KH spans P547–I606. In terms of domain architecture, S1 motif spans G616 to K684. Residues S682–D701 are disordered. Over residues P691 to D701 the composition is skewed to basic and acidic residues.

It belongs to the polyribonucleotide nucleotidyltransferase family. The cofactor is Mg(2+).

It localises to the cytoplasm. It catalyses the reaction RNA(n+1) + phosphate = RNA(n) + a ribonucleoside 5'-diphosphate. Functionally, involved in mRNA degradation. Catalyzes the phosphorolysis of single-stranded polyribonucleotides processively in the 3'- to 5'-direction. This is Polyribonucleotide nucleotidyltransferase from Streptococcus pyogenes serotype M12 (strain MGAS2096).